A 119-amino-acid polypeptide reads, in one-letter code: Large ribosomal subunit protein bL20 (119 aa).

The protein belongs to the bacterial ribosomal protein bL20 family.

Functionally, binds directly to 23S ribosomal RNA and is necessary for the in vitro assembly process of the 50S ribosomal subunit. It is not involved in the protein synthesizing functions of that subunit. The sequence is that of Large ribosomal subunit protein bL20 from Rhodopseudomonas palustris (strain ATCC BAA-98 / CGA009).